Consider the following 938-residue polypeptide: Isoleucine--tRNA ligase (938 aa).

Positions 58–68 (PYANGSIHIGH) match the 'HIGH' region motif. Lysine 183 carries the N6-acetyllysine modification. Glutamate 561 is a binding site for L-isoleucyl-5'-AMP. A 'KMSKS' region motif is present at residues 602-606 (KMSKS). Lysine 605 lines the ATP pocket. Positions 901, 904, 921, and 924 each coordinate Zn(2+).

This sequence belongs to the class-I aminoacyl-tRNA synthetase family. IleS type 1 subfamily. Monomer. Zn(2+) serves as cofactor.

Its subcellular location is the cytoplasm. The catalysed reaction is tRNA(Ile) + L-isoleucine + ATP = L-isoleucyl-tRNA(Ile) + AMP + diphosphate. Its function is as follows. Catalyzes the attachment of isoleucine to tRNA(Ile). As IleRS can inadvertently accommodate and process structurally similar amino acids such as valine, to avoid such errors it has two additional distinct tRNA(Ile)-dependent editing activities. One activity is designated as 'pretransfer' editing and involves the hydrolysis of activated Val-AMP. The other activity is designated 'posttransfer' editing and involves deacylation of mischarged Val-tRNA(Ile). In Escherichia fergusonii (strain ATCC 35469 / DSM 13698 / CCUG 18766 / IAM 14443 / JCM 21226 / LMG 7866 / NBRC 102419 / NCTC 12128 / CDC 0568-73), this protein is Isoleucine--tRNA ligase.